The primary structure comprises 870 residues: NEDD4-like E3 ubiquitin-protein ligase WWP2 (870 aa).

The C2 domain occupies 1–117; the sequence is MASASSSRAG…KNNGGKMENT (117 aa). The tract at residues 150 to 300 is disordered; it reads SVPNGSAVTD…QLPAAAQAPD (151 aa). The segment covering 152–171 has biased composition (polar residues); sequence PNGSAVTDGSQPPSRESSGT. Residues 198 to 208 show a composition bias toward low complexity; the sequence is GGSARTATAAS. A Phosphoserine modification is found at S211. 2 stretches are compositionally biased toward polar residues: residues 222-235 and 262-289; these read VKNS…NGTV and SVSS…TSGT. A compositionally biased stretch (low complexity) spans 290-300; the sequence is QQLPAAAQAPD. WW domains follow at residues 300-333, 330-363, 405-437, and 444-477; these read DALP…RPLP, RPLP…RPTA, GPLP…DPRT, and PALP…DPRP. The 335-residue stretch at 536 to 870 folds into the HECT domain; the sequence is KPYDLRRRLY…IEETEGFGQE (335 aa). C838 acts as the Glycyl thioester intermediate in catalysis.

Interacts with SCNN1A, SCNN1B, SCNN1G, WBP1, WBP2 and ATN1. Interacts with ERBB4, NDFIP1 and NDFIP2. Interacts with ARRDC4. Interacts with POU5F1, RBP1, EGR2 and SLC11A2. Interacts (via WW domains) with ARRDC1 (via PPxY motifs); ubiquitinates ARRDC1. Interacts (via WW domains) with ARRDC2 and ARRDC3. Autoubiquitinated. Ubiquitinated by the SCF(FBXL15) complex, leading to its degradation by the proteasome.

It is found in the nucleus. The enzyme catalyses S-ubiquitinyl-[E2 ubiquitin-conjugating enzyme]-L-cysteine + [acceptor protein]-L-lysine = [E2 ubiquitin-conjugating enzyme]-L-cysteine + N(6)-ubiquitinyl-[acceptor protein]-L-lysine.. It functions in the pathway protein modification; protein ubiquitination. With respect to regulation, activated by NDFIP1- and NDFIP2-binding. Its function is as follows. E3 ubiquitin-protein ligase which accepts ubiquitin from an E2 ubiquitin-conjugating enzyme in the form of a thioester and then directly transfers the ubiquitin to targeted substrates. Polyubiquitinates POU5F1 by 'Lys-63'-linked conjugation and promotes it to proteasomal degradation; regulates POU5F1 protein level during differentiation of embryonal carcinoma cells (ECCs) but not in undifferentiated ECCs and embryonic stem cells (ESCs). Ubiquitinates EGR2 and promotes it to proteasomal degradation; in T-cells the ubiquitination inhibits activation-induced cell death. Ubiquitinates SLC11A2; the ubiquitination is enhanced by presence of NDFIP1 and NDFIP2. Ubiquitinates RPB1 and promotes it to proteasomal degradation. The protein is NEDD4-like E3 ubiquitin-protein ligase WWP2 (Wwp2) of Mus musculus (Mouse).